The primary structure comprises 144 residues: Protein cornichon homolog 1 (144 aa).

Topologically, residues 1–10 are cytoplasmic; it reads MAFTFAAFCY. The chain crosses the membrane as a helical span at residues 11–31; it reads MLALLLTAALIFFAIWHIIAF. Residues 32-56 are Lumenal-facing; sequence DELKTDYKNPIDQCNTLNPLVLPEY. A helical transmembrane segment spans residues 57 to 77; sequence LIHAFFCVMFLCAAEWLTLGL. The Cytoplasmic portion of the chain corresponds to 78–122; sequence NMPLLAYHIWRYMSRPVMSGPGLYDPTTIMNADILAYCQKEGWCK. A helical membrane pass occupies residues 123–143; it reads LAFYLLAFFYYLYGMIYVLVS. A topological domain (lumenal) is located at residue Ser-144.

Belongs to the cornichon family. As to quaternary structure, interacts with AREG immature precursor and with immature TGFA, i.e. with a prosegment and lacking full N-glycosylation, but not with the fully N-glycosylated form. In the Golgi apparatus, may form a complex with GORASP55 and transmembrane TGFA.

It is found in the endoplasmic reticulum membrane. It localises to the golgi apparatus membrane. Functionally, involved in the selective transport and maturation of TGF-alpha family proteins. The polypeptide is Protein cornichon homolog 1 (CNIH1) (Bos taurus (Bovine)).